An 84-amino-acid polypeptide reads, in one-letter code: Gomesin (84 aa).

A signal peptide spans 1-23 (MNRTRLFACLLLAVLILVHESNA). Position 24 is a pyrrolidone carboxylic acid (Gln24). 2 disulfide bridges follow: Cys25/Cys38 and Cys29/Cys34. Arg41 bears the Arginine amide mark. A propeptide spanning residues 42–84 (GKRSLDETNVGTSDVEKRAFDDSNVPSLVEERELEDEGSFIFD) is cleaved from the precursor.

In hemocytes only, but not in all hemocytes observed.

The protein resides in the secreted. In terms of biological role, active against several Gram-positive bacteria such as Bacillus spp, Staphylococcus spp and E.faecalis, several Gram-negative bacteria such as E.coli, K.pneumoniae, P.aeruginosa and Salmonella spp, filamentous fungi such as N.crassa, T.viridae and yeasts such as C.albicans. It is active against the parasite L.amazonensis as well. It shows hemolytic activity. This chain is Gomesin, found in Acanthoscurria gomesiana (Tarantula spider).